A 118-amino-acid chain; its full sequence is Small ribosomal subunit protein uS13 (118 aa).

The interval 95–118 (LPLRGQRTRTNARTRKGPRKAIKK) is disordered.

The protein belongs to the universal ribosomal protein uS13 family. Part of the 30S ribosomal subunit. Forms a loose heterodimer with protein S19. Forms two bridges to the 50S subunit in the 70S ribosome.

Functionally, located at the top of the head of the 30S subunit, it contacts several helices of the 16S rRNA. In the 70S ribosome it contacts the 23S rRNA (bridge B1a) and protein L5 of the 50S subunit (bridge B1b), connecting the 2 subunits; these bridges are implicated in subunit movement. Contacts the tRNAs in the A and P-sites. This chain is Small ribosomal subunit protein uS13, found in Xylella fastidiosa (strain 9a5c).